The primary structure comprises 669 residues: RNA-binding protein 14 (669 aa).

2 consecutive RRM domains span residues 1–73 (MKIF…MSRP) and 79–149 (WKIF…LSTK). Residues Lys-126, Lys-135, Lys-138, Lys-149, and Lys-153 each participate in a glycyl lysine isopeptide (Lys-Gly) (interchain with G-Cter in SUMO2) cross-link. Disordered regions lie at residues 147-175 (STKG…DTAF) and 193-232 (NSTG…PLTA). At Ser-161 the chain carries Phosphoserine. Lys-164 carries the post-translational modification N6-acetyllysine; alternate. A Glycyl lysine isopeptide (Lys-Gly) (interchain with G-Cter in SUMO2); alternate cross-link involves residue Lys-164. Thr-206 is modified (phosphothreonine). A phosphoserine mark is found at Ser-220, Ser-242, Ser-244, Ser-256, Ser-272, and Ser-280. Residues 284-303 (PYRGQLASPSSQSAAASSLG) form a disordered region. Positions 287–303 (GQLASPSSQSAAASSLG) are enriched in low complexity. The TRBP-interacting domain; interaction with STIL stretch occupies residues 307-354 (GAQPSASALSSYGGQAAAASSLNSYGAQGSSLASYGNQPSSYGAQAAS). A phosphoserine mark is found at Ser-520, Ser-523, Ser-527, and Ser-562. The disordered stretch occupies residues 566–592 (VANANSTPPPYERTRLSPPRASYDDPY). Residue Thr-572 is modified to Phosphothreonine. A Phosphoserine modification is found at Ser-582. Lys-600 participates in a covalent cross-link: Glycyl lysine isopeptide (Lys-Gly) (interchain with G-Cter in SUMO2). Phosphoserine is present on residues Ser-618, Ser-620, Ser-623, Ser-627, Ser-643, and Ser-649.

Interacts with NCOA6, CITED1 and XRCC5/KU86. Interacts with SS18. Interacts with STIL and interferes with its interaction with CPAP. Interacts with gamma-tubulin. Part of the HDP-RNP complex composed of at least HEXIM1, PRKDC, XRCC5, XRCC6, paraspeckle proteins (SFPQ, NONO, PSPC1, RBM14, and MATR3) and NEAT1 RNA.

It localises to the nucleus. It is found in the nucleolus. The protein resides in the cytoplasm. Functionally, may function as a nuclear receptor coactivator, enhancing transcription through other coactivators such as NCOA6 and CITED1. Regulates centriole biogenesis by suppressing the formation of aberrant centriolar protein complexes in the cytoplasm and thus preserving mitotic spindle integrity. Prevents the formation of the STIL-CPAP complex (which can induce the formation of aberrant centriolar protein complexes) by interfering with the interaction of STIL with CPAP. Plays a role in the regulation of DNA virus-mediated innate immune response by assembling into the HDP-RNP complex, a complex that serves as a platform for IRF3 phosphorylation and subsequent innate immune response activation through the cGAS-STING pathway. This chain is RNA-binding protein 14 (RBM14), found in Pongo abelii (Sumatran orangutan).